We begin with the raw amino-acid sequence, 1452 residues long: Pleiotropic drug resistance protein 1 (1452 aa).

One can recognise an ABC transporter 1 domain in the interval 152-425 (LNYLHILPNR…FEYMGFICPE (274 aa)). ATP is bound at residue 185 to 192 (GPPSSGKT). The ABC transmembrane type-2 1 domain maps to 504–716 (LLKACTAREY…AQNAIAVNEF (213 aa)). Helical transmembrane passes span 521-541 (FVYIFKMIQLTLMASITMTLF), 554-574 (GAVFLGALFYALIMIMFNGFS), 609-629 (IPITLVEVAIWVCMTYYVIGF), 640-660 (LLLLICVNQMASGLFRLMGAL), 664-684 (IIVANTFGSFVLLTVLVMGGF), 694-714 (WWIWGYWISPMMYAQNAIAVN), and 753-773 (IGAGALIGYVFLFNFLFAVAL). A disordered region spans residues 808 to 830 (LGKSSSEKGNDVRRSASSRSMSS). Residues 812–821 (SSEKGNDVRR) are compositionally biased toward basic and acidic residues. In terms of domain architecture, ABC transporter 2 spans 855-1107 (ITFDDIRYAV…HLIKYFEGID (253 aa)). Residue 900-907 (GVSGAGKT) participates in ATP binding. In terms of domain architecture, ABC transmembrane type-2 2 spans 1180-1394 (TQCMACFWKQ…TLYGLIASQF (215 aa)). 7 helical membrane passes run 1199–1219 (YTAVRIMFTFFIALMFGTIFW), 1239–1259 (YIAVLFLGVQNATTVQPVIAI), 1287–1307 (LPYLFLQTIIYGVIVYAMIGF), 1314–1334 (FFWYLFFMYFTLLYFTLYGMM), 1344–1364 (IAAIISSAFYAVWNLFCGFIV), 1375–1395 (WYYYICPISWTLYGLIASQFG), and 1421–1441 (FVGYVALILVGISVLFLFIFA).

This sequence belongs to the ABC transporter superfamily. ABCG family. PDR (TC 3.A.1.205) subfamily. As to expression, expressed in root hypodermal passage cells. Expressed in stem tissues, particularly the vasculature and nodes adjacent to leaf axils.

It is found in the cell membrane. Functionally, cellular strigolactone (SL) transporter required for the exudation of SL from the root to the soil. The presence of SL in the vicinity of the roots is required for development of symbiotic interactions with arbuscular mycorrhizal fungi (AMF). Transports SL in the above ground tissues and is required for the control of shoot branching. SL regulates plant shoot architecture by inhibiting the outgrowth of axillary buds. Involved in the regulation of shootward and outward directional strigolactone transport in roots. Due to its polar localization in root cells, mediates directional shootward strigolactone transport, as well as localized outward directional transport for exudation to the soil. This is Pleiotropic drug resistance protein 1 from Petunia hybrida (Petunia).